Here is a 454-residue protein sequence, read N- to C-terminus: Nucleoprotein (454 aa).

Residues 1–62 (MSFVPGQENA…ATTQPNSGSV (62 aa)) form a disordered region. Low complexity predominate over residues 11 to 21 (GSRSSSGSRSG). Residues 49 to 61 (PKQTATTQPNSGS) are compositionally biased toward polar residues. The segment at 56 to 197 (QPNSGSVVPH…GFYVEGSGRS (142 aa)) is RNA-binding. The CoV N NTD domain occupies 64 to 193 (PHYSWFSGIT…VLPQGFYVEG (130 aa)). 3 residues coordinate RNA: R109, R125, and R167. 3 disordered regions span residues 159–230 (KTTA…STVK), 249–292 (AGQP…KRGP), and 382–428 (DGGA…RELT). S170 carries the phosphoserine; by host modification. T177 is modified (phosphothreonine; by host). Over residues 193–212 (GSGRSAPASRSGSRSQSRGP) the composition is skewed to low complexity. S194 carries the phosphoserine; by host modification. Polar residues predominate over residues 215 to 227 (RARSSSNQRQPAS). In terms of domain architecture, CoV N CTD spans 260–383 (AKEVRQKILN…ENLNAYQKDG (124 aa)). A compositionally biased stretch (basic residues) spans 267 to 277 (ILNKPRQKRTP). Positions 267 to 383 (ILNKPRQKRT…ENLNAYQKDG (117 aa)) are dimerization. A phosphoserine; by host mark is found at S389 and S424. T428 carries the post-translational modification Phosphothreonine; by host.

This sequence belongs to the betacoronavirus nucleocapsid protein family. Homooligomer. Both monomeric and oligomeric forms interact with RNA. Interacts with protein M. Interacts with NSP3; this interaction serves to tether the genome to the newly translated replicase-transcriptase complex at a very early stage of infection. ADP-ribosylated. The ADP-ribosylation is retained in the virion during infection. Post-translationally, phosphorylated on serine and threonine residues.

It localises to the virion. The protein resides in the host endoplasmic reticulum-Golgi intermediate compartment. It is found in the host Golgi apparatus. Functionally, packages the positive strand viral genome RNA into a helical ribonucleocapsid (RNP) and plays a fundamental role during virion assembly through its interactions with the viral genome and membrane protein M. Plays an important role in enhancing the efficiency of subgenomic viral RNA transcription as well as viral replication. The chain is Nucleoprotein from Murine coronavirus (strain S) (MHV-S).